We begin with the raw amino-acid sequence, 447 residues long: MDEEYDVIVLGTGLTECILSGIMSVNGKKVLHMDRNPYYGGESSSITPLEELYKRFQLLEGPPESMGRGRDWNVDLIPKFLMANGQLVKMLLYTEVTRYLDFKVVEGSFVYKGGKIYKVPSTETEALASNLMGMFEKRRFRKFLVFVANFDENDPKTFEGVDPQTTSMRDVYRKFDLGQDVIDFTGHALALYRTDDYLDQPCLETINRIKLYSESLARYGKSPYLYPLYGLGELPQGFARLSAIYGGTYMLNKPVDDIIMENGKVVGVKSEGEVARCKQLICDPSYIPDRVRKAGQVIRIICILSHPIKNTNDANSCQIIIPQNQVNRKSDIYVCMISYAHNVAAQGKYIAIASTTVETTDPEKEVEPALELLEPIDQKFVAISDLYEPIDDGCESQVFCSCSYDATTHFETTCNDIKDIYKRMAGMAFDFENMKRKQNDVFGEAEQ.

It belongs to the Rab GDI family. In terms of assembly, interacts with RHOH. Interacts with the non-phosphorylated forms of RAB1A, RAB3A, RAB5A, RAB5B, RAB5C, RAB8A, RAB8B, RAB10, RAB12, RAB35, and RAB43.

Its subcellular location is the cytoplasm. It localises to the golgi apparatus. The protein localises to the trans-Golgi network. In terms of biological role, regulates the GDP/GTP exchange reaction of most Rab proteins by inhibiting the dissociation of GDP from them, and the subsequent binding of GTP to them. Promotes the dissociation of GDP-bound Rab proteins from the membrane and inhibits their activation. Promotes the dissociation of RAB1A, RAB3A, RAB5A and RAB10 from membranes. This Macaca fascicularis (Crab-eating macaque) protein is Rab GDP dissociation inhibitor alpha (GDI1).